The sequence spans 194 residues: uncharacterized protein (194 aa).

This is an uncharacterized protein from Escherichia coli (strain K12).